Consider the following 340-residue polypeptide: MANQQIGGSTVTYNGAIPMGGPVAINSVIEIAGTEVLVDLKLDYATGKISGVQTLYIDLRDFLGDVTVTMPDTGQRITARAGTQGYYPVLSTNLMKFIVSATIDGKFPMNFINFPIALGVWPSGIKGDKGDPGAPGPAGGTVVVEDSGASFGESLLDTTSEPGKILVKRISGGSGITVTDYGDQVEIEASGGGGGGGGVTDALSLMYSTSTGGPASIAANALTDFDLSGALTVNSVGTGLTKSAAGIQLAAGKSGLYQITMTVKNNTVTTGNYLLRVKYGSSDFVVACPASSLTAGGTISLLIYCNVLGVPSLDVLKFSLCNDGAALSNYIINITAAKIN.

The interval 2-122 (ANQQIGGSTV…NFPIALGVWP (121 aa)) is domain-1. The region spanning 123 to 141 (SGIKGDKGDPGAPGPAGGT) is the Collagen-like domain. Residues 142–340 (VVVEDSGASF…IINITAAKIN (199 aa)) are domain-2.

In terms of assembly, homotrimer.

It is found in the virion. In association with P31 and P2, forms the spike complexes located at the 5-fold vertices of the capsid. Essential for viral infectivity. This Enterobacteria phage PRD1 (Bacteriophage PRD1) protein is Spike protein P5 (V).